We begin with the raw amino-acid sequence, 499 residues long: Protein-tyrosine sulfotransferase (499 aa).

At 1-9 (MRLPYRNKK) the chain is on the cytoplasmic side. Residues 10-30 (VTLWVLFGIIVITMFLFKFTE) traverse the membrane as a helical; Signal-anchor for type II membrane protein segment. At 31 to 499 (LRPTCLFKVD…NIMEDPMADT (469 aa)) the chain is on the lumenal side. Residue 80-84 (RSGTT) coordinates 3'-phosphoadenylyl sulfate. A disulfide bond links cysteine 98 and cysteine 158. Glutamate 101 functions as the Proton donor/acceptor in the catalytic mechanism. Positions 103 to 107 (RVIPR) are interaction with peptide substrate. 3'-phosphoadenylyl sulfate contacts are provided by arginine 185, serine 193, and arginine 197. Cysteines 227 and 235 form a disulfide. 3'-phosphoadenylyl sulfate is bound by residues tyrosine 240, 287 to 296 (SSDQVIKPVN), and lysine 302. Asparagine 346 and asparagine 380 each carry an N-linked (GlcNAc...) asparagine glycan. 2 disordered regions span residues 362–460 (KQVL…QKPK) and 476–499 (NNIN…MADT). 2 stretches are compositionally biased toward low complexity: residues 375-400 (TNTI…IIPE) and 408-434 (HVQQ…QQQQ). Basic and acidic residues predominate over residues 443 to 460 (EREAEPDREQQLLHQKPK). Positions 476–491 (NNINNNINNNNNNNNI) are enriched in low complexity.

This sequence belongs to the protein sulfotransferase family.

The protein resides in the golgi apparatus membrane. It catalyses the reaction L-tyrosyl-[protein] + 3'-phosphoadenylyl sulfate = O-sulfo-L-tyrosine-[protein] + adenosine 3',5'-bisphosphate + H(+). In terms of biological role, catalyzes the O-sulfation of tyrosine residues within acidic motifs of polypeptides. Has a role in protein secretion. This is Protein-tyrosine sulfotransferase from Drosophila melanogaster (Fruit fly).